Here is a 227-residue protein sequence, read N- to C-terminus: Large ribosomal subunit protein uL3 (227 aa).

Residues 146–167 (RGPMAHGSKFHRHQGSNGACSS) are disordered.

Belongs to the universal ribosomal protein uL3 family. As to quaternary structure, part of the 50S ribosomal subunit. Forms a cluster with proteins L14 and L19.

One of the primary rRNA binding proteins, it binds directly near the 3'-end of the 23S rRNA, where it nucleates assembly of the 50S subunit. The polypeptide is Large ribosomal subunit protein uL3 (Agathobacter rectalis (strain ATCC 33656 / DSM 3377 / JCM 17463 / KCTC 5835 / VPI 0990) (Eubacterium rectale)).